The following is a 149-amino-acid chain: uncharacterized protein (149 aa).

This is an uncharacterized protein from Caenorhabditis elegans.